A 158-amino-acid chain; its full sequence is NAD(P)H-quinone oxidoreductase subunit J, chloroplastic (158 aa).

The protein belongs to the complex I 30 kDa subunit family. As to quaternary structure, NDH is composed of at least 16 different subunits, 5 of which are encoded in the nucleus.

The protein localises to the plastid. Its subcellular location is the chloroplast thylakoid membrane. The catalysed reaction is a plastoquinone + NADH + (n+1) H(+)(in) = a plastoquinol + NAD(+) + n H(+)(out). The enzyme catalyses a plastoquinone + NADPH + (n+1) H(+)(in) = a plastoquinol + NADP(+) + n H(+)(out). In terms of biological role, NDH shuttles electrons from NAD(P)H:plastoquinone, via FMN and iron-sulfur (Fe-S) centers, to quinones in the photosynthetic chain and possibly in a chloroplast respiratory chain. The immediate electron acceptor for the enzyme in this species is believed to be plastoquinone. Couples the redox reaction to proton translocation, and thus conserves the redox energy in a proton gradient. The sequence is that of NAD(P)H-quinone oxidoreductase subunit J, chloroplastic from Platanus occidentalis (Sycamore).